Reading from the N-terminus, the 310-residue chain is GPN-loop GTPase 2 (310 aa).

Alanine 2 carries the post-translational modification N-acetylalanine. 19 to 24 is a binding site for GTP; sequence GSGKTT. The Gly-Pro-Asn (GPN)-loop; involved in dimer interface motif lies at 76-78; that stretch reads GPN. Residue 178–181 coordinates GTP; it reads SKMD.

The protein belongs to the GPN-loop GTPase family. In terms of assembly, heterodimers with GPN1 or GPN3. Binds to RNA polymerase II (RNAPII).

Small GTPase required for proper localization of RNA polymerase II and III (RNAPII and RNAPIII). May act at an RNAP assembly step prior to nuclear import. The protein is GPN-loop GTPase 2 of Homo sapiens (Human).